The chain runs to 115 residues: Envelope glycoprotein N (115 aa).

Residues 1–27 (MWLLRPAGSNFIVALIVLACAGPLTCS) form the signal peptide. At 28-77 (AQLDAGILNPWGSAGHNDAVMPGMFANSESDERFYSPHCSSRGLPLVNES) the chain is on the virion surface side. A helical membrane pass occupies residues 78–98 (MASVIFFLSLAMVCVAIVAIL). Topologically, residues 99–115 (YNCCFNSFKNSVINSRW) are intravirion.

The protein belongs to the herpesviridae glycoprotein N family. As to quaternary structure, interacts (via N-terminus) with gM (via N-terminus). The gM-gN heterodimer forms the gCII complex.

It localises to the virion membrane. The protein localises to the host membrane. Its subcellular location is the host Golgi apparatus. The protein resides in the host trans-Golgi network. Its function is as follows. Envelope glycoprotein necessary for proper maturation of gM and modulation of its membrane fusion activity. Also plays a critical role in virion morphogenesis. In Psittacid herpesvirus 1 (isolate Amazon parrot/-/97-0001/1997) (PsHV-1), this protein is Envelope glycoprotein N.